The chain runs to 179 residues: Casparian strip membrane protein 1 (179 aa).

Residues 1–17 (MKAGPLQLGVVPPANRA) are Cytoplasmic-facing. A helical transmembrane segment spans residues 18 to 38 (IAILDFFLRPIAIVGTLASAI). Residues 39–67 (AMATTNQTLPFFSQFIRFRAKFNDLPSFT) lie on the Extracellular side of the membrane. Residue asparagine 44 is glycosylated (N-linked (GlcNAc...) asparagine). A helical membrane pass occupies residues 68–88 (FFVVASSIVSAYLILSLGFSI). At 89–100 (LHIAKSNLVNSR) the chain is on the cytoplasmic side. The helical transmembrane segment at 101–121 (VLLLLLDTAAMGLLMAGSAAA) threads the bilayer. The Extracellular segment spans residues 122–154 (TAIVQLAHKGNNKVNWFAICQQYNSFCKRVSGS). The helical transmembrane segment at 155–175 (LIGSYAGVVVLILLILLSGVA) threads the bilayer. The Cytoplasmic segment spans residues 176 to 179 (LSRR).

The protein belongs to the Casparian strip membrane proteins (CASP) family. Homodimer and heterodimers.

It localises to the cell membrane. Its function is as follows. Regulates membrane-cell wall junctions and localized cell wall deposition. Required for establishment of the Casparian strip membrane domain (CSD) and the subsequent formation of Casparian strips, a cell wall modification of the root endodermis that determines an apoplastic barrier between the intraorganismal apoplasm and the extraorganismal apoplasm and prevents lateral diffusion. This chain is Casparian strip membrane protein 1, found in Lactuca sativa (Garden lettuce).